Consider the following 481-residue polypeptide: Hyaluronidase-4 (481 aa).

At 1 to 8 the chain is on the cytoplasmic side; that stretch reads MKVLSEGQ. The helical transmembrane segment at 9–29 threads the bilayer; sequence LKLCVVQPVHLTSWLLIFFIL. Over 30 to 453 the chain is Extracellular; sequence KSISCLKPAR…ADCREIKTAD (424 aa). Cystine bridges form between C59-C351, C223-C237, C376-C387, C381-C435, and C437-C446. N-linked (GlcNAc...) asparagine glycans are attached at residues N86 and N115. E147 acts as the Proton donor in catalysis. N-linked (GlcNAc...) (complex) asparagine glycosylation is present at N177. An N-linked (GlcNAc...) asparagine glycan is attached at N343. The helical transmembrane segment at 454-474 threads the bilayer; that stretch reads GCSGVSPSPGSLMTLCLLLLA. Over 475-481 the chain is Cytoplasmic; it reads SYRSIQL.

It belongs to the glycosyl hydrolase 56 family. Detected in placenta and skeletal muscle.

Its subcellular location is the membrane. The enzyme catalyses Random hydrolysis of (1-&gt;4)-linkages between N-acetyl-beta-D-glucosamine and D-glucuronate residues in hyaluronate.. Functionally, endo-hyaluronidase that degrades hyaluronan to smaller oligosaccharide fragments. Also has chondroitin sulfate hydrolase activity, The best substrate being the galactosaminidic linkage in the sequence of a trisulfated tetrasaccharide. This is Hyaluronidase-4 (HYAL4) from Homo sapiens (Human).